The chain runs to 127 residues: Aspartate 1-decarboxylase (127 aa).

The active-site Schiff-base intermediate with substrate; via pyruvic acid is Ser-25. At Ser-25 the chain carries Pyruvic acid (Ser). Thr-57 lines the substrate pocket. Residue Tyr-58 is the Proton donor of the active site. 73-75 provides a ligand contact to substrate; sequence GAA.

Belongs to the PanD family. As to quaternary structure, heterooctamer of four alpha and four beta subunits. It depends on pyruvate as a cofactor. Is synthesized initially as an inactive proenzyme, which is activated by self-cleavage at a specific serine bond to produce a beta-subunit with a hydroxyl group at its C-terminus and an alpha-subunit with a pyruvoyl group at its N-terminus.

Its subcellular location is the cytoplasm. The catalysed reaction is L-aspartate + H(+) = beta-alanine + CO2. Its pathway is cofactor biosynthesis; (R)-pantothenate biosynthesis; beta-alanine from L-aspartate: step 1/1. Its function is as follows. Catalyzes the pyruvoyl-dependent decarboxylation of aspartate to produce beta-alanine. This Listeria monocytogenes serovar 1/2a (strain ATCC BAA-679 / EGD-e) protein is Aspartate 1-decarboxylase.